We begin with the raw amino-acid sequence, 329 residues long: Chlorophyllase-1, chloroplastic (329 aa).

A chloroplast-targeting transit peptide spans 1–21 (MAAMVDSKPAASVQGTPLLAT). A GXSXG motif is present at residues 145 to 149 (GHSRG). The active-site Nucleophile is the Ser-147. Catalysis depends on charge relay system residues Asp-169 and His-242.

The protein belongs to the AB hydrolase superfamily. Lipase family.

It is found in the plastid. The protein resides in the chloroplast. The enzyme catalyses a chlorophyll + H2O = a chlorophyllide + phytol + H(+). It functions in the pathway porphyrin-containing compound metabolism; chlorophyll degradation. Functionally, catalyzes the hydrolysis of ester bond in chlorophyll to yield chlorophyllide and phytol. In Citrus unshiu (Satsuma mandarin), this protein is Chlorophyllase-1, chloroplastic.